The sequence spans 1165 residues: Disease resistance protein RPS4B (1165 aa).

Residues 12–174 (PQHQVFINFR…EIVKEVKKVL (163 aa)) enclose the TIR domain. Glutamate 86 is a catalytic residue. Residues 211-474 (KQRLKELEEK…FLDIACFRSQ (264 aa)) enclose the NB-ARC domain. The stretch at 592–613 (SHCPHECLTNNKINMPDGLELP) is one LRR 1 repeat. Residues 614 to 635 (LKEVRCLHWLKFPLEELPNDFD) form an LRR 2; degenerate repeat. LRR repeat units lie at residues 636–659 (PINL…VKDT), 684–703 (NLQR…RDVN), 704–725 (LTSL…PLIP), 726–748 (ENLK…VGNL), 772–794 (LKTL…EINK), and 795–818 (SSLK…SVQY). One copy of the LRR 9; degenerate repeat lies at 819–836 (LCLSRNDHLIYLPAGINQ). The LRR 10 repeat unit spans residues 837-863 (VSQLTRLDLKYCTKLTYVPELPPTLQY).

The protein belongs to the disease resistance TIR-NB-LRR family. Interacts with RRS1B. RPS4B-RRS1B heterodimer interacts with the bacterial effectors AvrRps4 and PopP2.

It is found in the nucleus. It catalyses the reaction NAD(+) + H2O = ADP-D-ribose + nicotinamide + H(+). Functionally, disease resistance (R) protein that specifically recognizes the AvrRps4 type III effector avirulence protein from P.syringae. Heterodimerization with RRS1B is required to form a functional complex to recognize AvrRps4 and to mediate the hypersensitive response. The protein is Disease resistance protein RPS4B of Arabidopsis thaliana (Mouse-ear cress).